The following is a 214-amino-acid chain: Putative nickel/cobalt efflux system MJ1092 (214 aa).

Helical transmembrane passes span 2-22 (VMIM…LHAL), 46-66 (ILLG…LGIL), 79-99 (VHDM…IWII), 116-136 (VITL…AVLL), 149-169 (IYVA…AVAF), and 188-208 (LPLI…AHPI).

Belongs to the NiCoT transporter (TC 2.A.52) family.

It localises to the cell membrane. Functionally, efflux system for nickel and cobalt. The sequence is that of Putative nickel/cobalt efflux system MJ1092 from Methanocaldococcus jannaschii (strain ATCC 43067 / DSM 2661 / JAL-1 / JCM 10045 / NBRC 100440) (Methanococcus jannaschii).